The chain runs to 493 residues: Activin receptor type-1C (493 aa).

Positions 1–25 (MTPARRSALSLALLLVALASDLAAG) are cleaved as a signal peptide. Residues 26–113 (LKCVCLLCDS…PDAPRLGPTE (88 aa)) lie on the Extracellular side of the membrane. The chain crosses the membrane as a helical span at residues 114–134 (LTVVITVPVCLLSIAAMLTIW). The Cytoplasmic portion of the chain corresponds to 135-493 (ACQDRQCTYR…QLCVKEDCKA (359 aa)). The GS domain occupies 165–194 (KTLKDLIYDATASGSGSGPPLLVQRTIART). The region spanning 195 to 485 (IVLQEIVGKG…LRVKKTISQL (291 aa)) is the Protein kinase domain. ATP contacts are provided by residues 201–209 (VGKGRFGEV) and K222. D323 (proton acceptor) is an active-site residue.

It belongs to the protein kinase superfamily. TKL Ser/Thr protein kinase family. TGFB receptor subfamily. In terms of assembly, binds the type 2 receptor protein ACVR2A. The cofactor is Mg(2+). Mn(2+) is required as a cofactor. In terms of tissue distribution, expressed in brain, kidney, lung, liver, testis, ovary, adrenal gland, heart, prostate, gastrointestinal tract, and spleen. Distributed throughout both adult and embryonic central nervous system and pancreatic islet cells.

It is found in the membrane. It catalyses the reaction L-threonyl-[receptor-protein] + ATP = O-phospho-L-threonyl-[receptor-protein] + ADP + H(+). The enzyme catalyses L-seryl-[receptor-protein] + ATP = O-phospho-L-seryl-[receptor-protein] + ADP + H(+). Its function is as follows. Serine/threonine protein kinase which forms a receptor complex on ligand binding. The receptor complex consists of 2 type II and 2 type I transmembrane serine/threonine kinases. Type II receptors phosphorylate and activate type I receptors which autophosphorylate, then bind and activate SMAD transcriptional regulators, SMAD2 and SMAD3. Receptor for activin AB, activin B, activin E and NODAL. Upon NODAL binding, activation results in increased apoptosis and reduced proliferation through suppression of AKT signaling and the activation of Smad2-dependent signaling pathway in pancreatic beta-cells, trophoblasts, epithelial or neuronal cells. Acts as a positive regulator for macrophage activation partially through down-regulation of PPARG expression. The protein is Activin receptor type-1C of Rattus norvegicus (Rat).